A 695-amino-acid polypeptide reads, in one-letter code: G-patch and R3H domain-containing protein C30B4.02c (695 aa).

Disordered stretches follow at residues 168 to 200 (SDKE…NDDS), 213 to 242 (DIAN…EFDI), 257 to 317 (FADL…FDEG), 332 to 351 (GNTD…DEDE), 388 to 448 (DSED…VAAR), and 475 to 517 (DKSK…DSDN). Residues 182-198 (CYKEQESEKELYSKDND) are compositionally biased toward basic and acidic residues. Acidic residues-rich tracts occupy residues 262 to 286 (VLEE…EEEE), 307 to 317 (EDSESLEFDEG), and 337 to 351 (LAED…DEDE). The segment covering 421 to 434 (KKDRKLPKKMRKAQ) has biased composition (basic residues). The R3H domain occupies 525–587 (KIFINDVYQR…KRYTMLSKTH (63 aa)). The 44-residue stretch at 652-695 (KENPGRRLLEKLGWYAGKGLGHPENEGSKDSLRAIVKVSRSGLG) folds into the G-patch domain.

Its subcellular location is the cytoplasm. The polypeptide is G-patch and R3H domain-containing protein C30B4.02c (Schizosaccharomyces pombe (strain 972 / ATCC 24843) (Fission yeast)).